We begin with the raw amino-acid sequence, 27 residues long: Trichocyst matrix protein T4-C (27 aa).

The protein belongs to the TMP family.

Its subcellular location is the trichocyst. Functionally, structural protein that crystallize inside the trichocyst matrix. The polypeptide is Trichocyst matrix protein T4-C (T4C) (Paramecium tetraurelia).